Here is a 156-residue protein sequence, read N- to C-terminus: Small ribosomal subunit protein uS7 (156 aa).

It belongs to the universal ribosomal protein uS7 family. As to quaternary structure, part of the 30S ribosomal subunit. Contacts proteins S9 and S11.

Functionally, one of the primary rRNA binding proteins, it binds directly to 16S rRNA where it nucleates assembly of the head domain of the 30S subunit. Is located at the subunit interface close to the decoding center, probably blocks exit of the E-site tRNA. This is Small ribosomal subunit protein uS7 from Alkaliphilus metalliredigens (strain QYMF).